Here is a 379-residue protein sequence, read N- to C-terminus: Cytochrome b (379 aa).

The next 4 membrane-spanning stretches (helical) occupy residues 34–54, 78–99, 114–134, and 179–199; these read YGSL…FLSM, WLLR…YLHA, WNIG…GYVL, and FFAF…LHIM. His84 and His98 together coordinate heme b. Residues His183 and His197 each contribute to the heme b site. A ubiquinone is bound at residue His202. A run of 4 helical transmembrane segments spans residues 227 to 247, 289 to 309, 321 to 341, and 349 to 369; these read IKDT…VLFE, LGGV…PLTS, LNKT…WIGG, and IIIG…SPTI.

The protein belongs to the cytochrome b family. The main subunits of complex b-c1 are: cytochrome b, cytochrome c1 and the Rieske protein. The cofactor is heme b.

The protein resides in the mitochondrion inner membrane. Functionally, component of the ubiquinol-cytochrome c reductase complex (complex III or cytochrome b-c1 complex) that is part of the mitochondrial respiratory chain. The b-c1 complex mediates electron transfer from ubiquinol to cytochrome c. Contributes to the generation of a proton gradient across the mitochondrial membrane that is then used for ATP synthesis. This Lumbricus terrestris (Common earthworm) protein is Cytochrome b (MT-CYB).